The chain runs to 71 residues: Small ribosomal subunit protein bS18 (71 aa).

It belongs to the bacterial ribosomal protein bS18 family. Part of the 30S ribosomal subunit. Forms a tight heterodimer with protein bS6.

Its function is as follows. Binds as a heterodimer with protein bS6 to the central domain of the 16S rRNA, where it helps stabilize the platform of the 30S subunit. In Synechococcus elongatus (strain ATCC 33912 / PCC 7942 / FACHB-805) (Anacystis nidulans R2), this protein is Small ribosomal subunit protein bS18.